The primary structure comprises 529 residues: MKAIWHGGFIYTMLEEGDRTEAVYVEDGVIKGTGSYERLKEKYGSPETEEISLNGAVMFPGFVDSHLHLIGHGEKQLQLDLSALTSKDSILQAAKERERQLPKNDWLIGEGWNENQFETPDYLTKHDLDRLFPDRPVLLKRICRHAIAVNSAALQAAGISRNTPDPDGGVIVKDANGEPTGLLFDKAQDLILKAVPPVSQHYVDEALTAAIKDCWTKGLTGGHSEDLSYYGDVSVPMKAYEKAAAGGKYPFRCHLLVHHEAVDRWEQLEKLSGPYVEFGAMKIFADGALGGRTALLKEPYQDDPSTNGVQVHDDETLGRLIRKAREKGMEVAVHAIGDLAFEKVLNAIEKHPPKNGRHDRLIHAQVLDNELIERAARMPIALDLQPHFVASDFPWVIDRLGKDRMKTAFAWKTLISKGILCAGGSDAPIEPVDPLLGIQSAVLRKSSHEQNGPSYNESECLPVYEAIKLYTEGSAGIIYKEKSRGKIAEGYDADFTVLSGDPFAIDPAQLHLLEIKKTVINGQIVYEKS.

The protein belongs to the metallo-dependent hydrolases superfamily.

The polypeptide is Putative amidohydrolase YtcJ (ytcJ) (Bacillus subtilis (strain 168)).